Here is a 131-residue protein sequence, read N- to C-terminus: Large-conductance mechanosensitive channel (131 aa).

A run of 3 helical transmembrane segments spans residues 8-28 (FAMRGNVVDLAVGVIIGGAFG), 30-50 (IVSSLVNDILMPLVGLLLGGV), and 67-87 (GMFIQTVVDFFIISFSIFVFV).

Belongs to the MscL family. Homopentamer.

The protein localises to the cell membrane. In terms of biological role, channel that opens in response to stretch forces in the membrane lipid bilayer. May participate in the regulation of osmotic pressure changes within the cell. This is Large-conductance mechanosensitive channel from Geobacillus sp. (strain WCH70).